Consider the following 577-residue polypeptide: Peroxynitrite isomerase THAP4 (577 aa).

The THAP-type zinc finger occupies 1–85 (MVICCAAVNC…LKPTAVPSIF (85 aa)). The segment at 84-221 (IFHLTEKKRG…DKSGISMDDF (138 aa)) is disordered. The span at 157-170 (AAQEAASQEQAQQA) shows a compositional bias: low complexity. The residue at position 163 (Ser163) is a Phosphoserine. The short motif at 235–238 (LHSY) is the HCFC1-binding motif (HBM) element. Phosphoserine is present on Ser239. The interval 240–324 (FSSKHTRERP…AVQSEHSDAS (85 aa)) is disordered. The span at 247-266 (ERPSVPREPIDRKRLKKDVE) shows a compositional bias: basic and acidic residues. Residues 290 to 300 (TATPQKPSQSP) show a composition bias toward low complexity. Residues 415 to 577 (PPKMNPVVEP…LHVTYKKVTP (163 aa)) are nitrobindin. Residues Thr444 and His567 each coordinate heme b.

This sequence in the C-terminal section; belongs to the nitrobindin family. Homodimer. The cofactor is heme b.

It is found in the cytoplasm. Its subcellular location is the nucleus. The enzyme catalyses peroxynitrite = nitrate. The protein operates within nitrogen metabolism. Its function is as follows. Heme-binding protein able to scavenge peroxynitrite and to protect free L-tyrosine against peroxynitrite-mediated nitration, by acting as a peroxynitrite isomerase that converts peroxynitrite to nitrate. Therefore, this protein likely plays a role in peroxynitrite sensing and in the detoxification of reactive nitrogen and oxygen species (RNS and ROS, respectively). Is able to bind nitric oxide (NO) in vitro, but may act as a sensor of peroxynitrite levels in vivo, possibly modulating the transcriptional activity residing in the N-terminal region. The protein is Peroxynitrite isomerase THAP4 of Homo sapiens (Human).